The sequence spans 488 residues: UL37 immediate early glycoprotein (488 aa).

The signal sequence occupies residues 1–22 (MSPVYVNLLGSVGLLAFWYFSY). Acidic residues predominate over residues 83–107 (GEESVTEDTEREDTEEEREDEEEEN). The interval 83–119 (GEESVTEDTEREDTEEEREDEEEENEARTPEVNPMDA) is disordered. N206, N210, N219, N223, N242, N275, N281, N294, N297, N306, N333, N337, N343, N384, and N391 each carry an N-linked (GlcNAc...) asparagine; by host glycan. The helical transmembrane segment at 439–459 (ICTVAAGSIALLSLFCILLIG) threads the bilayer.

Belongs to the immediate early glycoprotein family. Interacts with host BAX. Interacts with host RSAD2/viperin; this interaction results in RSAD2/viperin relocalization from the endoplasmic reticulum to the mitochondria, actin cytoskeleton disruption and enhancement of infection. Interacts with host PEX19; this interaction inhibits the peroxisomal-dependent antiviral signaling. Interacts with host CHCHD6; this interaction rewires mitochondria by engaging the conserved MICOS complex.

Its subcellular location is the host membrane. The protein localises to the host endoplasmic reticulum membrane. The protein resides in the host Golgi apparatus membrane. It is found in the host mitochondrion membrane. It localises to the host peroxisome. In terms of biological role, multifunctional transmembrane protein that plays several key roles in viral replication. Rapidely traffics from the host endoplasmic reticulum to the outer mitochondrial membrane where it acts to inhibit host immune response, block apoptotic signaling, regulate calcium flux, and induce mitochondrial fragmentation. Sequesters proapoptotic BAX at the outer mitochondrial membrane and prevents cytochrome c release and subsequent initiation of the proapoptotic cascade. Also provoques a calcium efflux from host endoplasmic reticulum and F-actin cytoskeleton disruption. Participates in the increase of host mitochondrial biogenesis, thus promoting viral replication by efficient use of newly made mitochondria. Additionally, a subset of vMIA localizes to peroxisomes, causing fragmentation and blocking peroxisomal MAVS signaling. Mechanistically, inhibits host MAVS oligomerization at peroxisomes in a mitochondrial fission factors (MFF)-dependent manner and in mitochondria independently of mitochondrial fission factors. Plays an essential role in the trafficking of host viperin/RSAD2 from the endoplasmic reticulum to the viral assembly compartment via the mitochondria during viral infection as failure of viperin to localize to the mitochondria results in insufficient lipogenesis and thus reduces viral replication. Its function is as follows. May play a role in escape from the host antiviral response. This chain is UL37 immediate early glycoprotein (UL37), found in Homo sapiens (Human).